Here is a 744-residue protein sequence, read N- to C-terminus: Palmitoyltransferase ZDHHC5-A (744 aa).

Over residues 1-11 the composition is skewed to gly residues; that stretch reads MPSGSMSGGVS. The segment at 1-25 is disordered; the sequence is MPSGSMSGGVSGPTSPPHPTVPSRP. At 1-30 the chain is on the cytoplasmic side; sequence MPSGSMSGGVSGPTSPPHPTVPSRPLRPSR. Residues 31 to 51 traverse the membrane as a helical segment; that stretch reads YVPVSAATAFLVGSTTLFFCF. Residues 52–61 lie on the Extracellular side of the membrane; the sequence is TCPWLSEQFS. The chain crosses the membrane as a helical span at residues 62–82; it reads VAVPIYNGVMFMFVLANFCMA. The Cytoplasmic portion of the chain corresponds to 83–167; that stretch reads TFMDPGIFPR…IGRRNYRYFF (85 aa). One can recognise a DHHC domain in the interval 121-171; the sequence is KWCSTCRFYRPPRCSHCSVCDNCVEDFDHHCPWVNNCIGRRNYRYFFLFLL. Cys-151 (S-palmitoyl cysteine intermediate) is an active-site residue. Residues 168–188 traverse the membrane as a helical segment; it reads LFLLSLTAHIMGVFGFGLLFI. Topologically, residues 189-208 are extracellular; sequence LYHTQQLDRVHSAVTMAVMC. A helical transmembrane segment spans residues 209–229; it reads VAGLFFIPVAGLTGFHVVLVA. The Cytoplasmic portion of the chain corresponds to 230–744; the sequence is RGRTTNEQVT…VGGTTYEISV (515 aa). Disordered regions lie at residues 314–523, 556–645, and 664–744; these read SLEM…PVVG, QHAV…SLSY, and SVAG…EISV. The span at 369–393 shows a compositional bias: polar residues; it reads TYSSPGKNHTALTHAYANQSSQQPG. The segment covering 398–413 has biased composition (basic and acidic residues); sequence PSLDGREGGGAERSGA. The segment covering 415 to 428 has biased composition (gly residues); that stretch reads RTGGGPGGPPGSGI. A compositionally biased stretch (polar residues) spans 460–501; the sequence is THNAPPSEATTSTSYKSLANQTPPQAARNGSLSYDSLLTPSE. Positions 571–584 are enriched in basic and acidic residues; it reads PERERERLLHDSQA. Residues 585-601 are compositionally biased toward basic residues; sequence QHHHHHHHHHHHHRPPR. 2 stretches are compositionally biased toward low complexity: residues 621–630 and 689–723; these read RTRSTDTTHP and PKPS…SPAH. The segment covering 725–737 has biased composition (gly residues); the sequence is PGGGVKKVTGVGG.

It belongs to the DHHC palmitoyltransferase family. ERF2/ZDHHC9 subfamily.

The protein localises to the cell membrane. It carries out the reaction L-cysteinyl-[protein] + hexadecanoyl-CoA = S-hexadecanoyl-L-cysteinyl-[protein] + CoA. Palmitoyltransferase that catalyzes the addition of palmitate onto various protein substrates and is involved in a variety of cellular processes. The sequence is that of Palmitoyltransferase ZDHHC5-A from Danio rerio (Zebrafish).